We begin with the raw amino-acid sequence, 302 residues long: Geranylgeranyl diphosphate synthase (302 aa).

Lys53, Arg56, and His87 together coordinate isopentenyl diphosphate. Residues Asp94 and Asp100 each coordinate Mg(2+). Arg105 contacts (2E,6E)-farnesyl diphosphate. Position 106 (Arg106) interacts with isopentenyl diphosphate. Residues Lys189, Thr190, and Gln227 each contribute to the (2E,6E)-farnesyl diphosphate site.

This sequence belongs to the FPP/GGPP synthase family. Mg(2+) is required as a cofactor.

It catalyses the reaction isopentenyl diphosphate + (2E,6E)-farnesyl diphosphate = (2E,6E,10E)-geranylgeranyl diphosphate + diphosphate. Its pathway is isoprenoid biosynthesis; geranylgeranyl diphosphate biosynthesis; geranylgeranyl diphosphate from farnesyl diphosphate and isopentenyl diphosphate: step 1/1. In terms of biological role, catalyzes the condensation of farnesyl diphosphate (FPP) and isopentenyl diphosphate (IPP) to yield geranylgeranyl diphosphate (GGPP) needed for biosynthesis of carotenoids and diterpenes. The protein is Geranylgeranyl diphosphate synthase (crtE) of Pantoea ananas (Erwinia uredovora).